A 207-amino-acid polypeptide reads, in one-letter code: uncharacterized protein (207 aa).

The chain crosses the membrane as a helical span at residues 177-197 (LILAIGFIIGILLPTFFILLG).

The protein resides in the membrane. This is an uncharacterized protein from Haemophilus influenzae (strain ATCC 51907 / DSM 11121 / KW20 / Rd).